An 821-amino-acid chain; its full sequence is Spindle apparatus protein lin-5 (821 aa).

Residues 161-199 (EASSGFRTPKRNNYSLTSLQTPTATARRLRTASSTARRS) form a disordered region. Polar residues predominate over residues 162–180 (ASSGFRTPKRNNYSLTSLQ). Low complexity predominate over residues 181 to 199 (TPTATARRLRTASSTARRS). Residues 211–634 (KFMRSERELK…REKESAEIKK (424 aa)) are a coiled coil. Disordered regions lie at residues 736–758 (RSES…FTPS) and 779–821 (LKCS…SKKQ).

As to quaternary structure, interacts with gpr-1; gpr-1 forms a complex with gpr-2 and GDP-bound goa-1.

The protein resides in the cytoplasm. The protein localises to the cell cortex. It is found in the cytoskeleton. It localises to the spindle. Its subcellular location is the chromosome. The protein resides in the centromere. The protein localises to the kinetochore. It is found in the microtubule organizing center. It localises to the centrosome. In terms of biological role, essential component of the spindle apparatus required for spindle positioning and chromosome movement. Acts to recruit or anchor gpr-1/gpr-2 complex to the spindle and cortex. Also involved, directly or indirectly, in cytokinesis and in the coupling of DNA replication, centrosome duplication and mitotic division. The chain is Spindle apparatus protein lin-5 (lin-5) from Caenorhabditis elegans.